Here is a 109-residue protein sequence, read N- to C-terminus: Movement protein TGB2 (109 aa).

Residues 1–9 lie on the Cytoplasmic side of the membrane; that stretch reads MPLTPPPDF. The helical transmembrane segment at 10-30 threads the bilayer; sequence TKVYLSAALGVSLALVVWLLI. The Lumenal portion of the chain corresponds to 31–72; sequence RSTLPVVGDRDHNLPHGGWYRDGTKSVFYNSPGRLNSIEARK. Residues 73 to 93 form a helical membrane-spanning segment; the sequence is APLLGQPWAIVVLLVLLIWAS. Over 94-109 the chain is Cytoplasmic; the sequence is HKLGRPNCRACAGSHT.

Belongs to the Tymovirales TGBp2 protein family.

The protein resides in the host endoplasmic reticulum membrane. Functionally, plays a role in viral cell-to-cell propagation, by facilitating genome transport to neighboring plant cells through plasmosdesmata,. The sequence is that of Movement protein TGB2 from Solanum tuberosum (Potato).